Reading from the N-terminus, the 721-residue chain is Ribonucleoside-diphosphate reductase subunit alpha (721 aa).

Residues threonine 159, 175–176, glycine 204, 384–388, and 589–593 each bind substrate; these read SC, NLCSE, and PTGSI. A disulfide bridge connects residues cysteine 176 and cysteine 413. Catalysis depends on asparagine 384, which acts as the Proton acceptor. Cysteine 386 acts as the Cysteine radical intermediate in catalysis. Glutamate 388 serves as the catalytic Proton acceptor.

Belongs to the ribonucleoside diphosphate reductase large chain family. Tetramer of two alpha and two beta subunits.

It carries out the reaction a 2'-deoxyribonucleoside 5'-diphosphate + [thioredoxin]-disulfide + H2O = a ribonucleoside 5'-diphosphate + [thioredoxin]-dithiol. Under complex allosteric control mediated by deoxynucleoside triphosphates and ATP binding. The type of nucleotide bound at the specificity site determines substrate preference. It seems probable that ATP makes the enzyme reduce CDP and UDP, dGTP favors ADP reduction and dTTP favors GDP reduction. Its function is as follows. Provides the precursors necessary for DNA synthesis. Catalyzes the biosynthesis of deoxyribonucleotides from the corresponding ribonucleotides. In Mycoplasma genitalium (strain ATCC 33530 / DSM 19775 / NCTC 10195 / G37) (Mycoplasmoides genitalium), this protein is Ribonucleoside-diphosphate reductase subunit alpha (nrdE).